A 427-amino-acid chain; its full sequence is Trigger factor (427 aa).

The PPIase FKBP-type domain occupies 163 to 248 (GDTVVIDFVG…IHEVKTKEVP (86 aa)).

This sequence belongs to the FKBP-type PPIase family. Tig subfamily.

It is found in the cytoplasm. The catalysed reaction is [protein]-peptidylproline (omega=180) = [protein]-peptidylproline (omega=0). Involved in protein export. Acts as a chaperone by maintaining the newly synthesized protein in an open conformation. Functions as a peptidyl-prolyl cis-trans isomerase. This Streptococcus pyogenes serotype M18 (strain MGAS8232) protein is Trigger factor.